A 509-amino-acid chain; its full sequence is 2-isopropylmalate synthase (509 aa).

Residues 5-267 form the Pyruvate carboxyltransferase domain; the sequence is IQIFDTTLRD…QTALNLEETK (263 aa). Residues Asp-14, His-202, His-204, and Asn-238 each contribute to the Mn(2+) site. The tract at residues 391 to 509 is regulatory domain; it reads KLETLQLQYV…AAENVEKVGN (119 aa).

This sequence belongs to the alpha-IPM synthase/homocitrate synthase family. LeuA type 1 subfamily. In terms of assembly, homodimer. The cofactor is Mn(2+).

Its subcellular location is the cytoplasm. The catalysed reaction is 3-methyl-2-oxobutanoate + acetyl-CoA + H2O = (2S)-2-isopropylmalate + CoA + H(+). It functions in the pathway amino-acid biosynthesis; L-leucine biosynthesis; L-leucine from 3-methyl-2-oxobutanoate: step 1/4. Its function is as follows. Catalyzes the condensation of the acetyl group of acetyl-CoA with 3-methyl-2-oxobutanoate (2-ketoisovalerate) to form 3-carboxy-3-hydroxy-4-methylpentanoate (2-isopropylmalate). In Staphylococcus aureus (strain MRSA252), this protein is 2-isopropylmalate synthase.